We begin with the raw amino-acid sequence, 353 residues long: Photosystem II protein D1 (353 aa).

Thr-2 carries the N-acetylthreonine modification. Residue Thr-2 is modified to Phosphothreonine. A run of 3 helical transmembrane segments spans residues Tyr-29–Ser-46, His-118–Leu-133, and Trp-142–Ala-156. His-118 serves as a coordination point for chlorophyll a. Tyr-126 lines the pheophytin a pocket. Asp-170 and Glu-189 together coordinate [CaMn4O5] cluster. A helical transmembrane segment spans residues Phe-197–Leu-218. Chlorophyll a is bound at residue His-198. Residues His-215 and Ser-264–Phe-265 contribute to the a quinone site. His-215 provides a ligand contact to Fe cation. His-272 is a Fe cation binding site. The chain crosses the membrane as a helical span at residues Phe-274 to Leu-288. Residues His-332, Glu-333, Asp-342, and Ala-344 each contribute to the [CaMn4O5] cluster site. Positions Ala-345–Gly-353 are excised as a propeptide.

Belongs to the reaction center PufL/M/PsbA/D family. As to quaternary structure, PSII is composed of 1 copy each of membrane proteins PsbA, PsbB, PsbC, PsbD, PsbE, PsbF, PsbH, PsbI, PsbJ, PsbK, PsbL, PsbM, PsbT, PsbX, PsbY, PsbZ, Psb30/Ycf12, at least 3 peripheral proteins of the oxygen-evolving complex and a large number of cofactors. It forms dimeric complexes. The D1/D2 heterodimer binds P680, chlorophylls that are the primary electron donor of PSII, and subsequent electron acceptors. It shares a non-heme iron and each subunit binds pheophytin, quinone, additional chlorophylls, carotenoids and lipids. D1 provides most of the ligands for the Mn4-Ca-O5 cluster of the oxygen-evolving complex (OEC). There is also a Cl(-1) ion associated with D1 and D2, which is required for oxygen evolution. The PSII complex binds additional chlorophylls, carotenoids and specific lipids. serves as cofactor. Tyr-161 forms a radical intermediate that is referred to as redox-active TyrZ, YZ or Y-Z. Post-translationally, C-terminally processed by CTPA; processing is essential to allow assembly of the oxygen-evolving complex and thus photosynthetic growth.

The protein localises to the plastid. It is found in the chloroplast thylakoid membrane. It catalyses the reaction 2 a plastoquinone + 4 hnu + 2 H2O = 2 a plastoquinol + O2. Its function is as follows. Photosystem II (PSII) is a light-driven water:plastoquinone oxidoreductase that uses light energy to abstract electrons from H(2)O, generating O(2) and a proton gradient subsequently used for ATP formation. It consists of a core antenna complex that captures photons, and an electron transfer chain that converts photonic excitation into a charge separation. The D1/D2 (PsbA/PsbD) reaction center heterodimer binds P680, the primary electron donor of PSII as well as several subsequent electron acceptors. The polypeptide is Photosystem II protein D1 (Lotus japonicus (Lotus corniculatus var. japonicus)).